The following is a 985-amino-acid chain: Probable oxidoreductase YjgC (985 aa).

The 77-residue stretch at Gly-3–Asp-79 folds into the 2Fe-2S ferredoxin-type domain. [2Fe-2S] cluster is bound by residues Cys-37, Cys-48, Cys-51, and Cys-63. A 4Fe-4S His(Cys)3-ligated-type domain is found at Asp-79–Lys-119. His-95, Cys-99, Cys-102, Cys-109, Cys-148, Cys-151, Cys-154, Cys-158, Cys-191, Cys-194, Cys-197, Cys-201, Cys-265, Cys-268, Cys-272, and Cys-300 together coordinate [4Fe-4S] cluster. 4Fe-4S ferredoxin-type domains follow at residues Pro-139 to Asp-170 and Asn-182 to Met-211. The 4Fe-4S Mo/W bis-MGD-type domain maps to Ile-258 to Glu-314.

This sequence in the C-terminal section; belongs to the prokaryotic molybdopterin-containing oxidoreductase family. Requires [2Fe-2S] cluster as cofactor. [4Fe-4S] cluster is required as a cofactor. The cofactor is Mo-bis(molybdopterin guanine dinucleotide).

In Bacillus subtilis (strain 168), this protein is Probable oxidoreductase YjgC (yjgC).